We begin with the raw amino-acid sequence, 328 residues long: Phosphate acyltransferase (328 aa).

Belongs to the PlsX family. In terms of assembly, homodimer. Probably interacts with PlsY.

It localises to the cytoplasm. The catalysed reaction is a fatty acyl-[ACP] + phosphate = an acyl phosphate + holo-[ACP]. Its pathway is lipid metabolism; phospholipid metabolism. Functionally, catalyzes the reversible formation of acyl-phosphate (acyl-PO(4)) from acyl-[acyl-carrier-protein] (acyl-ACP). This enzyme utilizes acyl-ACP as fatty acyl donor, but not acyl-CoA. This Staphylococcus aureus (strain Mu3 / ATCC 700698) protein is Phosphate acyltransferase.